The primary structure comprises 331 residues: Phosphoribosylformylglycinamidine cyclo-ligase (331 aa).

It belongs to the AIR synthase family.

Its subcellular location is the cytoplasm. The catalysed reaction is 2-formamido-N(1)-(5-O-phospho-beta-D-ribosyl)acetamidine + ATP = 5-amino-1-(5-phospho-beta-D-ribosyl)imidazole + ADP + phosphate + H(+). It functions in the pathway purine metabolism; IMP biosynthesis via de novo pathway; 5-amino-1-(5-phospho-D-ribosyl)imidazole from N(2)-formyl-N(1)-(5-phospho-D-ribosyl)glycinamide: step 2/2. This is Phosphoribosylformylglycinamidine cyclo-ligase from Clostridium botulinum (strain Langeland / NCTC 10281 / Type F).